A 503-amino-acid polypeptide reads, in one-letter code: Long-chain-fatty-acid--CoA ligase FadD13 (503 aa).

The protein belongs to the ATP-dependent AMP-binding enzyme family. As to quaternary structure, homodimer.

The protein localises to the cell membrane. It carries out the reaction a long-chain fatty acid + ATP + CoA = a long-chain fatty acyl-CoA + AMP + diphosphate. It participates in lipid metabolism; fatty acid biosynthesis. Required for maintaining the appropriate mycolic acid composition and permeability of the envelope on its exposure to acidic pH. Catalyzes the activation of long-chain fatty acids as acyl-coenzyme A (acyl-CoA), which are then transferred to the multifunctional polyketide synthase (PKS) type III for further chain extension. In Mycobacterium tuberculosis (strain CDC 1551 / Oshkosh), this protein is Long-chain-fatty-acid--CoA ligase FadD13 (fadD13).